The chain runs to 130 residues: Small ribosomal subunit protein uS11 (130 aa).

It belongs to the universal ribosomal protein uS11 family. In terms of assembly, part of the 30S ribosomal subunit. Interacts with proteins S7 and S18. Binds to IF-3.

Its function is as follows. Located on the platform of the 30S subunit, it bridges several disparate RNA helices of the 16S rRNA. Forms part of the Shine-Dalgarno cleft in the 70S ribosome. The protein is Small ribosomal subunit protein uS11 of Alkalilimnicola ehrlichii (strain ATCC BAA-1101 / DSM 17681 / MLHE-1).